We begin with the raw amino-acid sequence, 785 residues long: Endonuclease MutS2 (785 aa).

ATP is bound at residue 333–340 (GPNTGGKT). The Smr domain occupies 710 to 785 (LDLRGQRYDE…GNGATIVQLK (76 aa)).

It belongs to the DNA mismatch repair MutS family. MutS2 subfamily. As to quaternary structure, homodimer. Binds to stalled ribosomes, contacting rRNA.

Endonuclease that is involved in the suppression of homologous recombination and thus may have a key role in the control of bacterial genetic diversity. Functionally, acts as a ribosome collision sensor, splitting the ribosome into its 2 subunits. Detects stalled/collided 70S ribosomes which it binds and splits by an ATP-hydrolysis driven conformational change. Acts upstream of the ribosome quality control system (RQC), a ribosome-associated complex that mediates the extraction of incompletely synthesized nascent chains from stalled ribosomes and their subsequent degradation. Probably generates substrates for RQC. This chain is Endonuclease MutS2, found in Lactobacillus acidophilus (strain ATCC 700396 / NCK56 / N2 / NCFM).